A 199-amino-acid chain; its full sequence is Molybdenum cofactor guanylyltransferase (199 aa).

Residues 12-14 (LAG), Lys25, Asn53, Asp71, and Asp101 each bind GTP. Mg(2+) is bound at residue Asp101.

It belongs to the MobA family. In terms of assembly, monomer. Requires Mg(2+) as cofactor.

It is found in the cytoplasm. The enzyme catalyses Mo-molybdopterin + GTP + H(+) = Mo-molybdopterin guanine dinucleotide + diphosphate. Functionally, transfers a GMP moiety from GTP to Mo-molybdopterin (Mo-MPT) cofactor (Moco or molybdenum cofactor) to form Mo-molybdopterin guanine dinucleotide (Mo-MGD) cofactor. The sequence is that of Molybdenum cofactor guanylyltransferase from Cupriavidus taiwanensis (strain DSM 17343 / BCRC 17206 / CCUG 44338 / CIP 107171 / LMG 19424 / R1) (Ralstonia taiwanensis (strain LMG 19424)).